We begin with the raw amino-acid sequence, 141 residues long: Putative pre-16S rRNA nuclease (141 aa).

It belongs to the YqgF nuclease family.

The protein localises to the cytoplasm. Functionally, could be a nuclease involved in processing of the 5'-end of pre-16S rRNA. This chain is Putative pre-16S rRNA nuclease, found in Aliivibrio fischeri (strain MJ11) (Vibrio fischeri).